A 61-amino-acid polypeptide reads, in one-letter code: UPF0312 protein (61 aa).

The protein belongs to the UPF0312 family.

The protein is UPF0312 protein of Delftia acidovorans (Pseudomonas acidovorans).